The following is a 636-amino-acid chain: Chaperone protein DnaK (636 aa).

T198 bears the Phosphothreonine; by autocatalysis mark. A disordered region spans residues I600–K636. Residues A601–S618 show a composition bias toward low complexity. Acidic residues predominate over residues Q619–K636.

The protein belongs to the heat shock protein 70 family.

Acts as a chaperone. The sequence is that of Chaperone protein DnaK from Vibrio vulnificus (strain CMCP6).